Reading from the N-terminus, the 102-residue chain is Small ribosomal subunit protein uS10 (102 aa).

It belongs to the universal ribosomal protein uS10 family. As to quaternary structure, part of the 30S ribosomal subunit.

Functionally, involved in the binding of tRNA to the ribosomes. The protein is Small ribosomal subunit protein uS10 of Chloroflexus aurantiacus (strain ATCC 29366 / DSM 635 / J-10-fl).